Here is a 549-residue protein sequence, read N- to C-terminus: Undecaprenyl phosphate-alpha-4-amino-4-deoxy-L-arabinose arabinosyl transferase 1 (549 aa).

12 consecutive transmembrane segments (helical) span residues 9-29, 80-102, 112-132, 133-153, 176-196, 204-224, 257-277, 290-310, 312-332, 342-362, 377-397, and 402-422; these read LLLI…GLWI, LFGV…YLLA, SLAS…AGYA, NLDP…WFTF, FMTK…PYAI, LLIY…PWAL, WWYY…LLPA, SSGF…LSKG, LPAY…NTLV, LLAF…LALV, HLVL…LQAM, and LWAA…AALP.

The protein belongs to the glycosyltransferase 83 family.

The protein resides in the cell inner membrane. It carries out the reaction 4-amino-4-deoxy-alpha-L-arabinopyranosyl di-trans,octa-cis-undecaprenyl phosphate + lipid IVA = lipid IIA + di-trans,octa-cis-undecaprenyl phosphate.. It functions in the pathway lipopolysaccharide metabolism; 4-amino-4-deoxy-beta-L-arabinose-lipid A biosynthesis. Functionally, catalyzes the transfer of the L-Ara4N moiety of the glycolipid undecaprenyl phosphate-alpha-L-Ara4N to lipid A. The modified arabinose is attached to lipid A and is required for resistance to polymyxin and cationic antimicrobial peptides. The protein is Undecaprenyl phosphate-alpha-4-amino-4-deoxy-L-arabinose arabinosyl transferase 1 of Pseudomonas fluorescens (strain ATCC BAA-477 / NRRL B-23932 / Pf-5).